Reading from the N-terminus, the 137-residue chain is Ribosome-binding factor A (137 aa).

It belongs to the RbfA family. In terms of assembly, monomer. Binds 30S ribosomal subunits, but not 50S ribosomal subunits or 70S ribosomes.

The protein resides in the cytoplasm. Functionally, one of several proteins that assist in the late maturation steps of the functional core of the 30S ribosomal subunit. Associates with free 30S ribosomal subunits (but not with 30S subunits that are part of 70S ribosomes or polysomes). Required for efficient processing of 16S rRNA. May interact with the 5'-terminal helix region of 16S rRNA. The polypeptide is Ribosome-binding factor A (Shewanella amazonensis (strain ATCC BAA-1098 / SB2B)).